The following is an 88-amino-acid chain: Small ribosomal subunit protein bS20 (88 aa).

Residues 1–28 (MANIKSQIKRNRQNEKRRLRNKSVKSSL) form a disordered region. Positions 7–23 (QIKRNRQNEKRRLRNKS) are enriched in basic residues.

The protein belongs to the bacterial ribosomal protein bS20 family.

Its function is as follows. Binds directly to 16S ribosomal RNA. In Salinispora tropica (strain ATCC BAA-916 / DSM 44818 / JCM 13857 / NBRC 105044 / CNB-440), this protein is Small ribosomal subunit protein bS20.